Here is a 351-residue protein sequence, read N- to C-terminus: Uroporphyrinogen decarboxylase (351 aa).

Substrate is bound by residues 25–29 (RQAGR), aspartate 74, tyrosine 151, serine 206, and histidine 325.

Belongs to the uroporphyrinogen decarboxylase family. As to quaternary structure, homodimer.

The protein localises to the cytoplasm. The catalysed reaction is uroporphyrinogen III + 4 H(+) = coproporphyrinogen III + 4 CO2. It functions in the pathway porphyrin-containing compound metabolism; protoporphyrin-IX biosynthesis; coproporphyrinogen-III from 5-aminolevulinate: step 4/4. Functionally, catalyzes the decarboxylation of four acetate groups of uroporphyrinogen-III to yield coproporphyrinogen-III. The protein is Uroporphyrinogen decarboxylase of Chlorobium chlorochromatii (strain CaD3).